The chain runs to 225 residues: Phosphatidylserine decarboxylase proenzyme (225 aa).

The active-site Schiff-base intermediate with substrate; via pyruvic acid is the Ser-182. Ser-182 carries the post-translational modification Pyruvic acid (Ser); by autocatalysis.

The protein belongs to the phosphatidylserine decarboxylase family. PSD-A subfamily. In terms of assembly, heterodimer of a large membrane-associated beta subunit and a small pyruvoyl-containing alpha subunit. Pyruvate is required as a cofactor. Is synthesized initially as an inactive proenzyme. Formation of the active enzyme involves a self-maturation process in which the active site pyruvoyl group is generated from an internal serine residue via an autocatalytic post-translational modification. Two non-identical subunits are generated from the proenzyme in this reaction, and the pyruvate is formed at the N-terminus of the alpha chain, which is derived from the carboxyl end of the proenzyme. The post-translation cleavage follows an unusual pathway, termed non-hydrolytic serinolysis, in which the side chain hydroxyl group of the serine supplies its oxygen atom to form the C-terminus of the beta chain, while the remainder of the serine residue undergoes an oxidative deamination to produce ammonia and the pyruvoyl prosthetic group on the alpha chain.

It localises to the cell membrane. The catalysed reaction is a 1,2-diacyl-sn-glycero-3-phospho-L-serine + H(+) = a 1,2-diacyl-sn-glycero-3-phosphoethanolamine + CO2. It participates in phospholipid metabolism; phosphatidylethanolamine biosynthesis; phosphatidylethanolamine from CDP-diacylglycerol: step 2/2. Its function is as follows. Catalyzes the formation of phosphatidylethanolamine (PtdEtn) from phosphatidylserine (PtdSer). The chain is Phosphatidylserine decarboxylase proenzyme from Neorickettsia sennetsu (strain ATCC VR-367 / Miyayama) (Ehrlichia sennetsu).